The chain runs to 411 residues: Protein translocase subunit SecY (411 aa).

The next 10 helical transmembrane spans lie at 11–31 (IIFTLFLLVLARLGIFIPVPG), 52–72 (IFSGGGFSTIGIFALGIVPYI), 111–131 (ALGWATLQSGAISIWVKPYVF), 135–155 (FAFVCESVLALTAGSMIIMWL), 163–180 (GIGNGASLLIFQNIVSGL), 197–217 (SLKFGLFIAIFLLMIIITICV), 253–273 (VMPIVFASASMALPSYLTQII), 291–311 (LYLLLYCALILFFSYFYTSIV), 349–369 (TFLGASFLFTVALIPFIIEKV), and 377–397 (GLGATSLLILVGVAIDTAKQI).

Belongs to the SecY/SEC61-alpha family. As to quaternary structure, component of the plastid Sec protein translocase complex, which is composed of at least SecY, SecE and SecG.

It localises to the plastid. It is found in the chloroplast thylakoid membrane. In terms of biological role, the central subunit of the protein translocation channel SecYE. Consists of two halves formed by TMs 1-5 and 6-10. These two domains form a lateral gate at the front which open onto the bilayer between TMs 2 and 7, and are clamped together by SecE at the back. The channel is closed by both a pore ring composed of hydrophobic SecY resides and a short helix (helix 2A) on the extracellular side of the membrane which forms a plug. The chain is Protein translocase subunit SecY from Pyropia yezoensis (Susabi-nori).